A 475-amino-acid polypeptide reads, in one-letter code: Cysteine--tRNA ligase (475 aa).

Cys-28 serves as a coordination point for Zn(2+). Residues 30–40 carry the 'HIGH' region motif; that stretch reads PTVYDYAHIGN. Zn(2+) contacts are provided by Cys-213, His-238, and Glu-242. Positions 270 to 274 match the 'KMSKS' region motif; it reads KMSKS. Lys-273 contributes to the ATP binding site.

This sequence belongs to the class-I aminoacyl-tRNA synthetase family. In terms of assembly, monomer. Requires Zn(2+) as cofactor.

The protein localises to the cytoplasm. It carries out the reaction tRNA(Cys) + L-cysteine + ATP = L-cysteinyl-tRNA(Cys) + AMP + diphosphate. This is Cysteine--tRNA ligase (cysS) from Chlamydia muridarum (strain MoPn / Nigg).